Consider the following 265-residue polypeptide: WUSCHEL-related homeobox 3B (265 aa).

A DNA-binding region (homeobox; WUS-type) is located at residues threonine 4 to leucine 68. Disordered stretches follow at residues glutamine 77–alanine 107 and proline 242–asparagine 265. Over residues serine 254–asparagine 265 the composition is skewed to low complexity.

Belongs to the WUS homeobox family. In terms of tissue distribution, predominantly expressed in tissues enriched for shoot meristems and young lateral organ primordia. First expressed in lateral domains of shoot meristems. It is then expressed in the margins of young lateral organ primordia. Not expressed in roots, seedling leaves or fully expanded coleoptiles. Also expressed in vegetative shoot apices (five leaf primordia and the SAM) and in the male inflorescence. Expressed at high level in the female inflorescence.

The protein resides in the nucleus. Functionally, probable transcription factor required to initiate organ founder cells in a lateral domain of shoot meristems. Involved in leaf formation. This Zea mays (Maize) protein is WUSCHEL-related homeobox 3B (WOX3B).